Here is a 613-residue protein sequence, read N- to C-terminus: Dihydroxy-acid dehydratase (613 aa).

A Mg(2+)-binding site is contributed by aspartate 81. Cysteine 122 is a binding site for [2Fe-2S] cluster. 2 residues coordinate Mg(2+): aspartate 123 and lysine 124. At lysine 124 the chain carries N6-carboxylysine. Residue cysteine 193 participates in [2Fe-2S] cluster binding. Glutamate 489 contributes to the Mg(2+) binding site. The active-site Proton acceptor is the serine 515.

This sequence belongs to the IlvD/Edd family. Homodimer. [2Fe-2S] cluster is required as a cofactor. Requires Mg(2+) as cofactor.

It carries out the reaction (2R)-2,3-dihydroxy-3-methylbutanoate = 3-methyl-2-oxobutanoate + H2O. It catalyses the reaction (2R,3R)-2,3-dihydroxy-3-methylpentanoate = (S)-3-methyl-2-oxopentanoate + H2O. It participates in amino-acid biosynthesis; L-isoleucine biosynthesis; L-isoleucine from 2-oxobutanoate: step 3/4. It functions in the pathway amino-acid biosynthesis; L-valine biosynthesis; L-valine from pyruvate: step 3/4. Functionally, functions in the biosynthesis of branched-chain amino acids. Catalyzes the dehydration of (2R,3R)-2,3-dihydroxy-3-methylpentanoate (2,3-dihydroxy-3-methylvalerate) into 2-oxo-3-methylpentanoate (2-oxo-3-methylvalerate) and of (2R)-2,3-dihydroxy-3-methylbutanoate (2,3-dihydroxyisovalerate) into 2-oxo-3-methylbutanoate (2-oxoisovalerate), the penultimate precursor to L-isoleucine and L-valine, respectively. The chain is Dihydroxy-acid dehydratase from Pseudomonas putida (strain ATCC 47054 / DSM 6125 / CFBP 8728 / NCIMB 11950 / KT2440).